The chain runs to 287 residues: Cyclopropane mycolic acid synthase MmaA2 (287 aa).

Residues 33 to 34 (YS), 72 to 74 (GCG), 94 to 99 (TLSKNQ), 123 to 124 (WE), and Ile-136 each bind S-adenosyl-L-methionine. The active site involves Cys-269.

The protein belongs to the CFA/CMAS family.

It catalyses the reaction a 1-acyl-2-(9Z)-enoyl-sn-glycero-3-phospholipid + S-adenosyl-L-methionine = a 1-acyl-2-(9-cyclopronane)-acyl-sn-glycero-3-phospholipid + S-adenosyl-L-homocysteine + H(+). Its pathway is lipid metabolism; mycolic acid biosynthesis. Catalyzes the conversion of a double bond to a cis cyclopropane ring at the distal position of an alpha mycolic acid via the transfer of a methylene group from S-adenosyl-L-methionine. MmaA2 also catalyzes the biosynthesis of the cis-cyclopropanated methoxymycolates. Cyclopropanated mycolic acids are key factors participating in cell envelope permeability, host immunomodulation and persistence. The sequence is that of Cyclopropane mycolic acid synthase MmaA2 (cmaC) from Mycobacterium bovis (strain ATCC BAA-935 / AF2122/97).